A 120-amino-acid polypeptide reads, in one-letter code: Immunogenic miracidial antigen 5D (120 aa).

The disordered stretch occupies residues 41–120; the sequence is HIDVGDEDYH…PKKYGSGYKH (80 aa). Residues 45–66 are compositionally biased toward acidic residues; it reads GDEDYHDGDDDVDYTDDVDDVD.

This sequence belongs to the immunogenic miracidial antigen family.

The chain is Immunogenic miracidial antigen 5D (5D) from Schistosoma japonicum (Blood fluke).